Reading from the N-terminus, the 347-residue chain is Bifunctional methylenetetrahydrofolate dehydrogenase/cyclohydrolase 2, mitochondrial (347 aa).

Substrate is bound by residues 98-102 and 145-147; these read YVRNK and VQL. NAD(+) contacts are provided by residues 214–216 and Arg-247; that span reads GRS. 323–327 contributes to the substrate binding site; sequence PGGVG.

The protein belongs to the tetrahydrofolate dehydrogenase/cyclohydrolase family. Mg(2+) is required as a cofactor.

It is found in the mitochondrion inner membrane. The catalysed reaction is (6R)-5,10-methylene-5,6,7,8-tetrahydrofolate + NAD(+) = (6R)-5,10-methenyltetrahydrofolate + NADH. The enzyme catalyses (6R)-5,10-methenyltetrahydrofolate + H2O = (6R)-10-formyltetrahydrofolate + H(+). It catalyses the reaction (6R)-5,10-methylene-5,6,7,8-tetrahydrofolate + NADP(+) = (6R)-5,10-methenyltetrahydrofolate + NADPH. The protein operates within one-carbon metabolism; tetrahydrofolate interconversion. Its function is as follows. Bifunctional mitochondrial folate-interconverting enzyme that has both NAD/NADP-dependent methylenetetrahydrofolate dehydrogenase and methenyltetrahydrofolate cyclohydrolase activities. The protein is Bifunctional methylenetetrahydrofolate dehydrogenase/cyclohydrolase 2, mitochondrial of Callithrix jacchus (White-tufted-ear marmoset).